We begin with the raw amino-acid sequence, 231 residues long: Small ribosomal subunit protein uS3 (231 aa).

Residues 39-107 (IRKFLKAKLY…DVTINIKEER (69 aa)) enclose the KH type-2 domain.

Belongs to the universal ribosomal protein uS3 family. Part of the 30S ribosomal subunit. Forms a tight complex with proteins S10 and S14.

Functionally, binds the lower part of the 30S subunit head. Binds mRNA in the 70S ribosome, positioning it for translation. This chain is Small ribosomal subunit protein uS3, found in Campylobacter hominis (strain ATCC BAA-381 / DSM 21671 / CCUG 45161 / LMG 19568 / NCTC 13146 / CH001A).